The primary structure comprises 235 residues: 2,3,4,5-tetrahydropyridine-2,6-dicarboxylate N-acetyltransferase (235 aa).

It belongs to the transferase hexapeptide repeat family. DapH subfamily.

The enzyme catalyses (S)-2,3,4,5-tetrahydrodipicolinate + acetyl-CoA + H2O = L-2-acetamido-6-oxoheptanedioate + CoA. It functions in the pathway amino-acid biosynthesis; L-lysine biosynthesis via DAP pathway; LL-2,6-diaminopimelate from (S)-tetrahydrodipicolinate (acetylase route): step 1/3. Catalyzes the transfer of an acetyl group from acetyl-CoA to tetrahydrodipicolinate. The polypeptide is 2,3,4,5-tetrahydropyridine-2,6-dicarboxylate N-acetyltransferase (Exiguobacterium sp. (strain ATCC BAA-1283 / AT1b)).